The sequence spans 68 residues: Figainin 1 (68 aa).

The signal sequence occupies residues 1 to 22; that stretch reads MAFLKKSLFLVLFLGLVSLSIG. Positions 23-45 are disordered; sequence EEEKREEEEKNEEGANQEENAEN. Positions 23–47 are excised as a propeptide; it reads EEEKREEEEKNEEGANQEENAENKE. The segment covering 26-42 has biased composition (acidic residues); the sequence is KREEEEKNEEGANQEEN. Lys67 is subject to Lysine amide.

In terms of tissue distribution, expressed by the skin glands.

It is found in the secreted. Antimicrobial peptide that displays antibacterial and antiprotozoal activity. Exhibits antibacterial activity against the Gram-positive bacteria S.epidermidis ATCC 12228 (MIC=2 uM), E.casseliflavus ATCC 700327 (MIC=16 uM), S.aureus ATCC 25923 (MIC=4 uM) and E.faecalis ATCC 29212 (MIC=8 uM), and the Gram-negative bacteria E.coli ATCC 25922 (MIC=16 uM) and K.pneumoniae ATCC 13883 (MIC=4 uM). Displays antiprotozoal activity against the epimastigote form of T.cruzi (IC(50)=15.9 uM). Does not show antimicrobial activity against the Gram-negative bacterium P.aeruginosa ATCC 27853, or the fungi C.albicans ATCC 90028 and C.parapsilosis ATCC 22019. Shows high cytolytic activity against human erythrocytes (HC(50)=10 uM), and displays anti-proliferative effects against various cancer cell lines including MCF-7 breast cancer cells (IC(50)=13.7 uM), HeLa cervical adenocarcinoma cells (IC(50)=11.1 uM) and B16F10 murine melanoma cells (IC(50)=10.5 uM). The polypeptide is Figainin 1 (Boana raniceps (Chaco tree frog)).